The following is a 592-amino-acid chain: Bifunctional purine biosynthesis protein ADE17 (592 aa).

One can recognise an MGS-like domain in the interval 1 to 147; sequence MANYTKTAIL…KNHARVTILS (147 aa). Residues 35 to 38, 65 to 68, 102 to 103, and 126 to 127 each bind IMP; these read SGGT, RVKT, CN, and DI. Lys138 functions as the Proton donor/acceptor; for FAICAR cyclization activity in the catalytic mechanism. Residues 206 to 207, His267, Gly315, Asp338, Asn430, and Arg450 contribute to the 5-amino-1-(5-phospho-beta-D-ribosyl)imidazole-4-carboxamide site; that span reads RY. The active-site Proton acceptor; for AICAR formyltransferase activity is His267. (6R)-10-formyltetrahydrofolate is bound at residue Ile451. Residue Phe541 coordinates 5-amino-1-(5-phospho-beta-D-ribosyl)imidazole-4-carboxamide. (6R)-10-formyltetrahydrofolate is bound by residues Asp546 and 565–566; that span reads SV. Arg588 contributes to the 5-amino-1-(5-phospho-beta-D-ribosyl)imidazole-4-carboxamide binding site.

This sequence belongs to the PurH family. In terms of assembly, homodimer.

It is found in the cytoplasm. It localises to the cytosol. It carries out the reaction (6R)-10-formyltetrahydrofolate + 5-amino-1-(5-phospho-beta-D-ribosyl)imidazole-4-carboxamide = 5-formamido-1-(5-phospho-D-ribosyl)imidazole-4-carboxamide + (6S)-5,6,7,8-tetrahydrofolate. It catalyses the reaction IMP + H2O = 5-formamido-1-(5-phospho-D-ribosyl)imidazole-4-carboxamide. It functions in the pathway purine metabolism; IMP biosynthesis via de novo pathway; 5-formamido-1-(5-phospho-D-ribosyl)imidazole-4-carboxamide from 5-amino-1-(5-phospho-D-ribosyl)imidazole-4-carboxamide (10-formyl THF route): step 1/1. The protein operates within purine metabolism; IMP biosynthesis via de novo pathway; IMP from 5-formamido-1-(5-phospho-D-ribosyl)imidazole-4-carboxamide: step 1/1. Its function is as follows. Bifunctional enzyme that catalyzes the last two steps of purine biosynthesis. Acts as a transformylase that incorporates a formyl group to the AMP analog AICAR (5-amino-1-(5-phospho-beta-D-ribosyl)imidazole-4-carboxamide) to produce the intermediate formyl-AICAR (FAICAR). Also catalyzes the cyclization of FAICAR to IMP. The protein is Bifunctional purine biosynthesis protein ADE17 of Saccharomyces cerevisiae (strain ATCC 204508 / S288c) (Baker's yeast).